A 149-amino-acid chain; its full sequence is Deoxyuridine 5'-triphosphate nucleotidohydrolase (149 aa).

Substrate contacts are provided by residues 68-70, asparagine 81, 85-87, and methionine 95; these read RSG and LID.

Belongs to the dUTPase family. Mg(2+) serves as cofactor.

It carries out the reaction dUTP + H2O = dUMP + diphosphate + H(+). The protein operates within pyrimidine metabolism; dUMP biosynthesis; dUMP from dCTP (dUTP route): step 2/2. Functionally, this enzyme is involved in nucleotide metabolism: it produces dUMP, the immediate precursor of thymidine nucleotides and it decreases the intracellular concentration of dUTP so that uracil cannot be incorporated into DNA. This chain is Deoxyuridine 5'-triphosphate nucleotidohydrolase, found in Methylibium petroleiphilum (strain ATCC BAA-1232 / LMG 22953 / PM1).